Consider the following 392-residue polypeptide: Phosphoglycerate kinase (392 aa).

Residues 21-23 (DLN), Arg36, 59-62 (HLGR), Arg113, and Arg146 contribute to the substrate site. Residues Lys197, Glu319, and 345–348 (GGDT) each bind ATP.

This sequence belongs to the phosphoglycerate kinase family. Monomer.

The protein localises to the cytoplasm. It catalyses the reaction (2R)-3-phosphoglycerate + ATP = (2R)-3-phospho-glyceroyl phosphate + ADP. It participates in carbohydrate degradation; glycolysis; pyruvate from D-glyceraldehyde 3-phosphate: step 2/5. The polypeptide is Phosphoglycerate kinase (Alkalilimnicola ehrlichii (strain ATCC BAA-1101 / DSM 17681 / MLHE-1)).